Reading from the N-terminus, the 392-residue chain is Phospho-N-acetylmuramoyl-pentapeptide-transferase (392 aa).

11 helical membrane-spanning segments follow: residues Y24–G44, T76–L96, F100–W120, Y137–E157, W170–F190, V193–A213, G225–T245, S262–F282, V289–I309, I314–V334, and Q369–L389.

Belongs to the glycosyltransferase 4 family. MraY subfamily. The cofactor is Mg(2+).

Its subcellular location is the cell inner membrane. It carries out the reaction UDP-N-acetyl-alpha-D-muramoyl-L-alanyl-gamma-D-glutamyl-meso-2,6-diaminopimeloyl-D-alanyl-D-alanine + di-trans,octa-cis-undecaprenyl phosphate = di-trans,octa-cis-undecaprenyl diphospho-N-acetyl-alpha-D-muramoyl-L-alanyl-D-glutamyl-meso-2,6-diaminopimeloyl-D-alanyl-D-alanine + UMP. The protein operates within cell wall biogenesis; peptidoglycan biosynthesis. Its function is as follows. Catalyzes the initial step of the lipid cycle reactions in the biosynthesis of the cell wall peptidoglycan: transfers peptidoglycan precursor phospho-MurNAc-pentapeptide from UDP-MurNAc-pentapeptide onto the lipid carrier undecaprenyl phosphate, yielding undecaprenyl-pyrophosphoryl-MurNAc-pentapeptide, known as lipid I. This is Phospho-N-acetylmuramoyl-pentapeptide-transferase from Delftia acidovorans (strain DSM 14801 / SPH-1).